The sequence spans 152 residues: UPF0266 membrane protein YobD (152 aa).

The next 3 helical transmembrane spans lie at 6-26 (LVLI…QFIM), 45-65 (IDSV…VTNH), and 67-87 (ALIT…IFWI).

The protein belongs to the UPF0266 family.

Its subcellular location is the cell inner membrane. This chain is UPF0266 membrane protein YobD, found in Escherichia coli O127:H6 (strain E2348/69 / EPEC).